A 163-amino-acid polypeptide reads, in one-letter code: ATP synthase subunit b 1 (163 aa).

A helical membrane pass occupies residues 6–26 (LAELWVAVAFLLFVGILIYVG).

This sequence belongs to the ATPase B chain family. F-type ATPases have 2 components, F(1) - the catalytic core - and F(0) - the membrane proton channel. F(1) has five subunits: alpha(3), beta(3), gamma(1), delta(1), epsilon(1). F(0) has three main subunits: a(1), b(2) and c(10-14). The alpha and beta chains form an alternating ring which encloses part of the gamma chain. F(1) is attached to F(0) by a central stalk formed by the gamma and epsilon chains, while a peripheral stalk is formed by the delta and b chains.

Its subcellular location is the cell inner membrane. Functionally, f(1)F(0) ATP synthase produces ATP from ADP in the presence of a proton or sodium gradient. F-type ATPases consist of two structural domains, F(1) containing the extramembraneous catalytic core and F(0) containing the membrane proton channel, linked together by a central stalk and a peripheral stalk. During catalysis, ATP synthesis in the catalytic domain of F(1) is coupled via a rotary mechanism of the central stalk subunits to proton translocation. Component of the F(0) channel, it forms part of the peripheral stalk, linking F(1) to F(0). In Xanthobacter autotrophicus (strain ATCC BAA-1158 / Py2), this protein is ATP synthase subunit b 1.